The sequence spans 225 residues: MGIRAIVVDTAGTTTDLNFIEEILFPYSAKALPAFLEENQHNVLVENCICDVQDIALEPDASLARVTEILLQWIKEDRKATPLKTIQGLIWKQGYANGEFKGHIFPDFIEALDGYKQQGLRVYSFSSGSVEAQKLLFSHSDAGDLNDKFNGHFDTRTGNKRFKQAYCNIVNTISLSPKQILFVSDVLEELKAASEAGLNVVQMVRDDSQRTGDFKTISSFAELSI.

The protein belongs to the HAD-like hydrolase superfamily. MasA/MtnC family. As to quaternary structure, monomer. The cofactor is Mg(2+).

It catalyses the reaction 5-methylsulfanyl-2,3-dioxopentyl phosphate + H2O = 1,2-dihydroxy-5-(methylsulfanyl)pent-1-en-3-one + phosphate. The protein operates within amino-acid biosynthesis; L-methionine biosynthesis via salvage pathway; L-methionine from S-methyl-5-thio-alpha-D-ribose 1-phosphate: step 3/6. Its pathway is amino-acid biosynthesis; L-methionine biosynthesis via salvage pathway; L-methionine from S-methyl-5-thio-alpha-D-ribose 1-phosphate: step 4/6. Functionally, bifunctional enzyme that catalyzes the enolization of 2,3-diketo-5-methylthiopentyl-1-phosphate (DK-MTP-1-P) into the intermediate 2-hydroxy-3-keto-5-methylthiopentenyl-1-phosphate (HK-MTPenyl-1-P), which is then dephosphorylated to form the acireductone 1,2-dihydroxy-3-keto-5-methylthiopentene (DHK-MTPene). The chain is Enolase-phosphatase E1 from Shewanella halifaxensis (strain HAW-EB4).